The primary structure comprises 129 residues: Cytochrome c oxidase subunit 5B, mitochondrial (129 aa).

Residues 1–31 constitute a mitochondrion transit peptide; sequence MASRLLRGAGALAAQALRARGPSGAAAVRSM. N6-acetyllysine occurs at positions 68 and 86. Positions 91, 93, 113, and 116 each coordinate Zn(2+). Lys121 carries the post-translational modification N6-acetyllysine.

It belongs to the cytochrome c oxidase subunit 5B family. As to quaternary structure, component of the cytochrome c oxidase (complex IV, CIV), a multisubunit enzyme composed of 14 subunits. The complex is composed of a catalytic core of 3 subunits MT-CO1, MT-CO2 and MT-CO3, encoded in the mitochondrial DNA, and 11 supernumerary subunits COX4I, COX5A, COX5B, COX6A, COX6B, COX6C, COX7A, COX7B, COX7C, COX8 and NDUFA4, which are encoded in the nuclear genome. The complex exists as a monomer or a dimer and forms supercomplexes (SCs) in the inner mitochondrial membrane with NADH-ubiquinone oxidoreductase (complex I, CI) and ubiquinol-cytochrome c oxidoreductase (cytochrome b-c1 complex, complex III, CIII), resulting in different assemblies (supercomplex SCI(1)III(2)IV(1) and megacomplex MCI(2)III(2)IV(2)).

Its subcellular location is the mitochondrion inner membrane. It functions in the pathway energy metabolism; oxidative phosphorylation. In terms of biological role, component of the cytochrome c oxidase, the last enzyme in the mitochondrial electron transport chain which drives oxidative phosphorylation. The respiratory chain contains 3 multisubunit complexes succinate dehydrogenase (complex II, CII), ubiquinol-cytochrome c oxidoreductase (cytochrome b-c1 complex, complex III, CIII) and cytochrome c oxidase (complex IV, CIV), that cooperate to transfer electrons derived from NADH and succinate to molecular oxygen, creating an electrochemical gradient over the inner membrane that drives transmembrane transport and the ATP synthase. Cytochrome c oxidase is the component of the respiratory chain that catalyzes the reduction of oxygen to water. Electrons originating from reduced cytochrome c in the intermembrane space (IMS) are transferred via the dinuclear copper A center (CU(A)) of subunit 2 and heme A of subunit 1 to the active site in subunit 1, a binuclear center (BNC) formed by heme A3 and copper B (CU(B)). The BNC reduces molecular oxygen to 2 water molecules using 4 electrons from cytochrome c in the IMS and 4 protons from the mitochondrial matrix. The protein is Cytochrome c oxidase subunit 5B, mitochondrial (COX5B) of Pongo abelii (Sumatran orangutan).